Reading from the N-terminus, the 195-residue chain is Molybdopterin synthase catalytic subunit (195 aa).

The segment at 1–37 (MSARPEPQPGSERNATEPLPSHLDPTTYPRTLTTTHG) is disordered. Positions 25–37 (PTTYPRTLTTTHG) are enriched in low complexity. Residues 141-142 (HR), K157, and 164-166 (KRE) each bind substrate.

Belongs to the MoaE family. MOCS2B subfamily. As to quaternary structure, heterotetramer; composed of 2 small (MOCS2A) and 2 large (MOCS2B) subunits.

The protein localises to the cytoplasm. The catalysed reaction is 2 [molybdopterin-synthase sulfur-carrier protein]-C-terminal-Gly-aminoethanethioate + cyclic pyranopterin phosphate + H2O = molybdopterin + 2 [molybdopterin-synthase sulfur-carrier protein]-C-terminal Gly-Gly + 2 H(+). Its pathway is cofactor biosynthesis; molybdopterin biosynthesis. In terms of biological role, catalytic subunit of the molybdopterin synthase complex, a complex that catalyzes the conversion of precursor Z into molybdopterin. Acts by mediating the incorporation of 2 sulfur atoms from thiocarboxylated MOCS2A into precursor Z to generate a dithiolene group. The sequence is that of Molybdopterin synthase catalytic subunit from Emericella nidulans (strain FGSC A4 / ATCC 38163 / CBS 112.46 / NRRL 194 / M139) (Aspergillus nidulans).